A 406-amino-acid polypeptide reads, in one-letter code: Phosphopentomutase (406 aa).

Residues D10, D305, H310, D346, H347, and H358 each contribute to the Mn(2+) site.

Belongs to the phosphopentomutase family. Mn(2+) serves as cofactor.

The protein resides in the cytoplasm. The enzyme catalyses 2-deoxy-alpha-D-ribose 1-phosphate = 2-deoxy-D-ribose 5-phosphate. The catalysed reaction is alpha-D-ribose 1-phosphate = D-ribose 5-phosphate. Its pathway is carbohydrate degradation; 2-deoxy-D-ribose 1-phosphate degradation; D-glyceraldehyde 3-phosphate and acetaldehyde from 2-deoxy-alpha-D-ribose 1-phosphate: step 1/2. Its function is as follows. Isomerase that catalyzes the conversion of deoxy-ribose 1-phosphate (dRib-1-P) and ribose 1-phosphate (Rib-1-P) to deoxy-ribose 5-phosphate (dRib-5-P) and ribose 5-phosphate (Rib-5-P), respectively. The chain is Phosphopentomutase from Methylorubrum extorquens (strain PA1) (Methylobacterium extorquens).